We begin with the raw amino-acid sequence, 330 residues long: Stimulated by retinoic acid gene 8 protein homolog (330 aa).

The Nuclear localization signal (NLS) motif lies at 50 to 55; that stretch reads RVARRR. The stretch at 88 to 112 forms a coiled coil; sequence QVLNKAKSHIPELEQTLDNLLKLKA.

Interacts with XPO1. Interacts with MEIOSIN. In terms of processing, phosphorylated. Expressed specifically in testis and fetal ovaries.

Its subcellular location is the cytoplasm. The protein localises to the nucleus. In terms of biological role, meiosis-inducer required for the transition into meiosis for both female and male germ cells. In female germ cells, acts downstream of ZGLP1 as a key effector of the meiotic program: required for premeiotic DNA replication and subsequent events in meiotic prophase. During spermatogenesis, next to its role in meiotic initiation, promotes (but is not required for) spermatogonial differentiation. In complex with MEIOSIN, directly activates the transcription of a subset of critical meiotic genes playing a central role in cell-cycle switching from mitosis to meiosis. This chain is Stimulated by retinoic acid gene 8 protein homolog, found in Homo sapiens (Human).